A 259-amino-acid chain; its full sequence is MADS-box protein ZMM17 (259 aa).

Residues 1-61 (MGRGKIEIKR…GKMFEYCSPA (61 aa)) form the MADS-box domain. The 91-residue stretch at 85–175 (DQQILLEMTR…YRMINENQQA (91 aa)) folds into the K-box domain. Residues 237 to 259 (PTQPNLQDPAAPCGGLHGHGLQL) form a disordered region.

As to expression, strong expression in female inflorescences (ears), but also weak expression in male inflorescences (tassels). At early stages of the development of the female spiklet, expressed in all organ primordia but later restricted to the ovule and the developing silk. At very late stages of development, expression becomes restricted to parts of the silk.

It is found in the nucleus. Probable transcription factor. The sequence is that of MADS-box protein ZMM17 (M17) from Zea mays (Maize).